Consider the following 60-residue polypeptide: Toxin S4C8 (60 aa).

Intrachain disulfides connect Cys3/Cys22, Cys17/Cys39, Cys41/Cys52, and Cys53/Cys58. Residues 41-48 are important for binding to L-type calcium channels; it reads CPTAMWPY.

This sequence belongs to the three-finger toxin family. Short-chain subfamily. L-type calcium blocker sub-subfamily. In terms of tissue distribution, expressed by the venom gland.

Its subcellular location is the secreted. Its function is as follows. This specific blocker of the L-type calcium channel (Cav1/CACNA1) is a smooth muscle relaxant and an inhibitor of cardiac contractions. This chain is Toxin S4C8, found in Dendroaspis jamesoni kaimosae (Eastern Jameson's mamba).